The primary structure comprises 332 residues: D-alanine--D-alanine ligase (332 aa).

The 206-residue stretch at 124–329 (KMWFSALNIP…FPDYLLSNIN (206 aa)) folds into the ATP-grasp domain. Residue 154–209 (ALVNWGSIFVKAASQGSSVGCYRIDNQEDVASTLAQAFTYSDYVIVEKTISARELE) participates in ATP binding. Positions 283, 296, and 298 each coordinate Mg(2+).

This sequence belongs to the D-alanine--D-alanine ligase family. Mg(2+) is required as a cofactor. It depends on Mn(2+) as a cofactor.

Its subcellular location is the cytoplasm. The catalysed reaction is 2 D-alanine + ATP = D-alanyl-D-alanine + ADP + phosphate + H(+). It participates in cell wall biogenesis; peptidoglycan biosynthesis. In terms of biological role, cell wall formation. This Shewanella piezotolerans (strain WP3 / JCM 13877) protein is D-alanine--D-alanine ligase.